The chain runs to 376 residues: UPF0754 membrane protein BH1148 (376 aa).

2 helical membrane-spanning segments follow: residues 3–23 and 355–375; these read LILFMIVIGAVIGGVTNSLAI and YLGALLGGGIGLVQSLIILLI.

Belongs to the UPF0754 family.

Its subcellular location is the cell membrane. This chain is UPF0754 membrane protein BH1148, found in Halalkalibacterium halodurans (strain ATCC BAA-125 / DSM 18197 / FERM 7344 / JCM 9153 / C-125) (Bacillus halodurans).